The primary structure comprises 355 residues: Apyrase apy-1 (355 aa).

The Cytoplasmic segment spans residues 1-6 (MTQESN). A helical; Signal-anchor for type II membrane protein transmembrane segment spans residues 7–29 (SNFFNFLLFGFVTAIAFYSGTQF). Asn30 is a glycosylation site (N-linked (GlcNAc...) asparagine). Residues 30–355 (NKSSEQEEHI…PYKYEGIAFA (326 aa)) are Lumenal-facing. Ca(2+)-binding residues include Ser119, Glu166, and Glu235. Asn291 carries N-linked (GlcNAc...) asparagine glycosylation. Glu350 contacts Ca(2+).

The protein belongs to the apyrase family. It depends on Ca(2+) as a cofactor.

The protein localises to the endomembrane system. The enzyme catalyses a ribonucleoside 5'-diphosphate + H2O = a ribonucleoside 5'-phosphate + phosphate + H(+). Functionally, hydrolyzes UDP and to a lesser extent GDP. By preventing the accumulation of NDP, may promote the reglucosylation of incompletely folded glycoproteins in the endoplasmic reticulum following the unfolded protein response. This chain is Apyrase apy-1, found in Caenorhabditis elegans.